The chain runs to 157 residues: Nucleoside deoxyribosyltransferase (157 aa).

Glu98 serves as the catalytic Nucleophile.

It belongs to the nucleoside deoxyribosyltransferase family. Homohexamer.

It carries out the reaction 2-deoxy-D-ribosyl-base(1) + base(2) = 2-deoxy-D-ribosyl-base(2) + base(1).. It participates in nucleotide metabolism; nucleotide salvage pathway. Functionally, catalyzes the cleavage of the glycosidic bond of 2'-deoxyribonucleosides and the transfer of the deoxyribosyl moiety to an acceptor purine or pyrimidine base. The polypeptide is Nucleoside deoxyribosyltransferase (ntd) (Lactobacillus leichmannii).